Reading from the N-terminus, the 334-residue chain is Protein-methionine-sulfoxide reductase catalytic subunit MsrP (334 aa).

The segment at residues 1–44 (MKKIRPLTEADVTAESAFFMQRRQVLKALGISAAALSLPSTAQA) is a signal peptide (tat-type signal). Residues Asn88, 91–92 (YE), Cys146, Thr181, Asn233, Arg238, and 249–251 (GIK) contribute to the Mo-molybdopterin site.

This sequence belongs to the MsrP family. Heterodimer of a catalytic subunit (MsrP) and a heme-binding subunit (MsrQ). Requires Mo-molybdopterin as cofactor. Predicted to be exported by the Tat system. The position of the signal peptide cleavage has not been experimentally proven.

It localises to the periplasm. The enzyme catalyses L-methionyl-[protein] + a quinone + H2O = L-methionyl-(S)-S-oxide-[protein] + a quinol. It catalyses the reaction L-methionyl-[protein] + a quinone + H2O = L-methionyl-(R)-S-oxide-[protein] + a quinol. Its function is as follows. Part of the MsrPQ system that repairs oxidized periplasmic proteins containing methionine sulfoxide residues (Met-O), using respiratory chain electrons. Thus protects these proteins from oxidative-stress damage caused by reactive species of oxygen and chlorine generated by the host defense mechanisms. MsrPQ is essential for the maintenance of envelope integrity under bleach stress, rescuing a wide series of structurally unrelated periplasmic proteins from methionine oxidation, including the primary periplasmic chaperone SurA and the lipoprotein Pal. The catalytic subunit MsrP is non-stereospecific, being able to reduce both (R-) and (S-) diastereoisomers of methionine sulfoxide. In Salmonella arizonae (strain ATCC BAA-731 / CDC346-86 / RSK2980), this protein is Protein-methionine-sulfoxide reductase catalytic subunit MsrP.